The primary structure comprises 563 residues: IQCJ-SCHIP1 readthrough transcript protein (563 aa).

Residues 47–67 (ESKVKIIQRAWREYLQRQEPL) enclose the IQ domain. 4 disordered regions span residues 63-150 (RQEP…VSAL), 164-295 (VIDE…EPPV), 312-336 (FREQEVRNQGQARTNSTSAQKNERE), and 384-430 (SGSD…SLDD). Over residues 76 to 87 (SVSSEKLSSSVS) the composition is skewed to low complexity. Positions 88–97 (MNTFSDSSTP) are enriched in polar residues. Over residues 108–143 (SDAGSSSSSSRASSQSNSTKVTPCSECKSSSSPGGS) the composition is skewed to low complexity. Positions 168 to 182 (WAPEEDGEEEEEEDE) are enriched in acidic residues. Composition is skewed to basic and acidic residues over residues 183–199 (RDQRGYRDDRSPAREPG) and 229–238 (HQHDPQDLRH). Position 193 is a phosphoserine (Ser-193). Positions 318–331 (RNQGQARTNSTSAQ) are enriched in polar residues. Over residues 385–399 (GSDKDSDADDSKTET) the composition is skewed to basic and acidic residues. Polar residues predominate over residues 400–411 (SLDTPLSPMSKQ). The required for interaction with ankyrins stretch occupies residues 419–563 (DTTEEESESL…KHMAEKMPAK (145 aa)). The segment covering 420 to 430 (TTEEESESLDD) has biased composition (acidic residues). A coiled-coil region spans residues 500–534 (IGQLQVIVNDLHSQIESLNEELVQLLLIRDELHTE).

As to quaternary structure, homooligomer (via coiled coil domain). Interacts (via IQ domain) with calmodulin; the interaction is direct and lost in presence of calcium. Interacts with ANK3 (via ANK repeats); required for localization at axon initial segments (AIS) and nodes of Ranvier. Interacts with SPTBN4. Interacts with KCNQ2 and KCNQ3. As to expression, highly expressed in brain and to a lower extent in heart and kidney.

The protein localises to the cell projection. It localises to the axon. It is found in the cytoplasm. May play a role in action potential conduction in myelinated cells through the organization of molecular complexes at nodes of Ranvier and axon initial segments. May also play a role in axon outgrowth and guidance. In Homo sapiens (Human), this protein is IQCJ-SCHIP1 readthrough transcript protein.